The primary structure comprises 63 residues: Large ribosomal subunit protein bL35 (63 aa).

Basic residues-rich tracts occupy residues 1–25 (MPKM…KHRQ) and 32–47 (LTKK…RPKK). The disordered stretch occupies residues 1–55 (MPKMKSKSSAAKRFKKTANGFKHRQSFTSHILTKKSTKRKRHLRPKKQVNPSDVP).

The protein belongs to the bacterial ribosomal protein bL35 family.

The sequence is that of Large ribosomal subunit protein bL35 from Hahella chejuensis (strain KCTC 2396).